Here is an 80-residue protein sequence, read N- to C-terminus: MPKKNEQPASFETALTELEQIVTRLESGDLPLEEALNEFERGVQLARQGQVKLQQAEQRVQILLSQNEDAPLTPFTPDAE.

It belongs to the XseB family. As to quaternary structure, heterooligomer composed of large and small subunits.

The protein resides in the cytoplasm. The enzyme catalyses Exonucleolytic cleavage in either 5'- to 3'- or 3'- to 5'-direction to yield nucleoside 5'-phosphates.. Bidirectionally degrades single-stranded DNA into large acid-insoluble oligonucleotides, which are then degraded further into small acid-soluble oligonucleotides. This is Exodeoxyribonuclease 7 small subunit from Cronobacter sakazakii (strain ATCC BAA-894) (Enterobacter sakazakii).